The chain runs to 216 residues: Golgi to ER traffic protein 1 (216 aa).

Residues 1 to 9 (MFDISSSNL) are Lumenal-facing. Residues 10-29 (LISVLVVLFAKQLINAVGKA) form a helical membrane-spanning segment. Over 30-116 (TLENIGWSAY…YISKYIGYMI (87 aa)) the chain is Cytoplasmic. Residues 54 to 105 (LDQKNVELAKVSKERKSISAQDQYARWTKLNRQFDKLTGEINKLKEETSASR) are a coiled coil. A helical transmembrane segment spans residues 117-137 (LVTTTLPIWFFRVWFRKAVLF). The Lumenal segment spans residues 138–161 (YFPTGVLPHYLEWFLALPFITTGG). Residues 162–178 (VGLTIWMSAVNNVVSSV) traverse the membrane as a helical segment. At 179-216 (IFLVKFPFEKEVPFPSKEVGNEKTSINKEEVSGTPAAN) the chain is on the cytoplasmic side. The disordered stretch occupies residues 193-216 (PSKEVGNEKTSINKEEVSGTPAAN). Basic and acidic residues predominate over residues 197-209 (VGNEKTSINKEEV).

The protein belongs to the WRB/GET1 family. As to quaternary structure, component of the Golgi to ER traffic (GET) complex, which is composed of GET1, GET2 and GET3. Within the complex, GET1 and GET2 form a heterotetramer which is stabilized by phosphatidylinositol binding and which binds to the GET3 homodimer.

The protein localises to the endoplasmic reticulum membrane. It is found in the golgi apparatus membrane. Its function is as follows. Required for the post-translational delivery of tail-anchored (TA) proteins to the endoplasmic reticulum. Together with GET2, acts as a membrane receptor for soluble GET3, which recognizes and selectively binds the transmembrane domain of TA proteins in the cytosol. The GET complex cooperates with the HDEL receptor ERD2 to mediate the ATP-dependent retrieval of resident ER proteins that contain a C-terminal H-D-E-L retention signal from the Golgi to the ER. The protein is Golgi to ER traffic protein 1 of Debaryomyces hansenii (strain ATCC 36239 / CBS 767 / BCRC 21394 / JCM 1990 / NBRC 0083 / IGC 2968) (Yeast).